A 467-amino-acid chain; its full sequence is Multiple inositol polyphosphate phosphatase 1 (467 aa).

An N-terminal signal peptide occupies residues 1-15; it reads MRLLILLLLPLVAIA. Residue H67 is part of the active site. N120, N159, and N234 each carry an N-linked (GlcNAc...) asparagine glycan. The GPI-anchor amidated glycine moiety is linked to residue G441. A propeptide spans 442–467 (removed in mature form); sequence GAPSLGSGVGGLLATTLAAMLVYLMH.

The protein belongs to the histidine acid phosphatase family. MINPP1 subfamily. N-glycosylated.

The protein resides in the cell membrane. It localises to the apical cell membrane. Its subcellular location is the basolateral cell membrane. It is found in the cell projection. The protein localises to the filopodium. The protein resides in the cell junction. The enzyme catalyses (2R)-2,3-bisphosphoglycerate + H2O = (2R)-2-phosphoglycerate + phosphate. It carries out the reaction 1D-myo-inositol hexakisphosphate + H2O = 1D-myo-inositol 1,2,4,5,6-pentakisphosphate + phosphate. The catalysed reaction is 1D-myo-inositol 1,2,4,5,6-pentakisphosphate + H2O = 1D-myo-inositol 1,2,5,6-tetrakisphosphate + phosphate. It catalyses the reaction 1D-myo-inositol 1,2,5,6-tetrakisphosphate + H2O = 1D-myo-inositol 1,2,6-trisphosphate + phosphate. Probable multiple inositol polyphosphate phosphatase that hydrolyzes 1D-myo-inositol 1,3,4,5,6-pentakisphosphate (InsP5[2OH]) and 1D-myo-inositol hexakisphosphate (InsP6) to a range of less phosphorylated inositol phosphates. This regulates the availability of these various small molecule second messengers and metal chelators which control many aspects of cell physiology. May have a dual substrate specificity, and function as a 2,3-bisphosphoglycerate 3-phosphatase hydrolyzing 2,3-bisphosphoglycerate to 2-phosphoglycerate. 2,3-bisphosphoglycerate (BPG) is formed as part of the Rapoport-Luebering glycolytic bypass. Has a role in embryonic tracheal development where it localizes to the leading edge of actively migrating branches. In these leading cells, enhances formation and/or maintenance of filopodia which may drive branch migration and elongation by cell-cell intercalation. The function in tracheal morphogenesis is dependent on its inositol polyphosphate phosphatase activity. This Drosophila melanogaster (Fruit fly) protein is Multiple inositol polyphosphate phosphatase 1.